The sequence spans 370 residues: Quinolinate synthase (370 aa).

His62 and Ser83 together coordinate iminosuccinate. Cys128 contributes to the [4Fe-4S] cluster binding site. Residues 154–156 and Ser171 contribute to the iminosuccinate site; that span reads YAN. Cys215 is a binding site for [4Fe-4S] cluster. Iminosuccinate contacts are provided by residues 241–243 and Thr258; that span reads HPE. Cys312 is a binding site for [4Fe-4S] cluster.

It belongs to the quinolinate synthase family. Type 1 subfamily. [4Fe-4S] cluster is required as a cofactor.

It localises to the cytoplasm. It catalyses the reaction iminosuccinate + dihydroxyacetone phosphate = quinolinate + phosphate + 2 H2O + H(+). Its pathway is cofactor biosynthesis; NAD(+) biosynthesis; quinolinate from iminoaspartate: step 1/1. Catalyzes the condensation of iminoaspartate with dihydroxyacetone phosphate to form quinolinate. This Neisseria meningitidis serogroup C (strain 053442) protein is Quinolinate synthase.